Consider the following 116-residue polypeptide: Flagellar transcriptional regulator FlhD (116 aa).

This sequence belongs to the FlhD family. In terms of assembly, homodimer; disulfide-linked. Forms a heterohexamer composed of two FlhC and four FlhD subunits. Each FlhC binds a FlhD dimer, forming a heterotrimer, and a hexamer assembles by dimerization of two heterotrimers.

The protein localises to the cytoplasm. Functionally, functions in complex with FlhC as a master transcriptional regulator that regulates transcription of several flagellar and non-flagellar operons by binding to their promoter region. Activates expression of class 2 flagellar genes, including fliA, which is a flagellum-specific sigma factor that turns on the class 3 genes. Also regulates genes whose products function in a variety of physiological pathways. The sequence is that of Flagellar transcriptional regulator FlhD from Pectobacterium carotovorum subsp. carotovorum (strain PC1).